The primary structure comprises 147 residues: 3-dehydroquinate dehydratase (147 aa).

The active-site Proton acceptor is the tyrosine 26. Positions 77, 83, and 90 each coordinate substrate. The Proton donor role is filled by histidine 103. Substrate contacts are provided by residues 104-105 (LS) and arginine 114.

The protein belongs to the type-II 3-dehydroquinase family. As to quaternary structure, homododecamer.

The enzyme catalyses 3-dehydroquinate = 3-dehydroshikimate + H2O. It participates in metabolic intermediate biosynthesis; chorismate biosynthesis; chorismate from D-erythrose 4-phosphate and phosphoenolpyruvate: step 3/7. Catalyzes a trans-dehydration via an enolate intermediate. In Proteus mirabilis (strain HI4320), this protein is 3-dehydroquinate dehydratase.